The following is a 475-amino-acid chain: Probable GABA permease (475 aa).

12 helical membrane passes run 27-47 (VTMLSIAGVIGAGLFVGSGHA), 48-68 (IAAAGPAALLAYLIAGTLVVL), 105-125 (LYWWFWVLVIPLEAIAAAAIL), 127-147 (AWFPAIDTWIFALAVTFLLTV), 163-183 (FALLKVIAIIAFIVLGAVAIV), 211-231 (AVLGALLTTMFSFMGTEIVTI), 250-270 (VIWRIGLFYLVSIFIVISIVP), 296-316 (LIVDLVVLVAVASCLNSAIYT), 345-365 (PAVLASTAVGFLTTIVNYFAP), 368-388 (VFTFLLASSGAVALLVYLVIA), 413-433 (PWLTWAVILFIVAALSIMLIM), and 438-458 (HEVFATALLTIFTVCLGLLNA).

Belongs to the amino acid-polyamine-organocation (APC) superfamily. Amino acid transporter (AAT) (TC 2.A.3.1) family.

The protein resides in the membrane. In terms of biological role, involved in the degradation of beta-alanine. This Pseudomonas aeruginosa (strain ATCC 15692 / DSM 22644 / CIP 104116 / JCM 14847 / LMG 12228 / 1C / PRS 101 / PAO1) protein is Probable GABA permease (bauD).